Here is an 89-residue protein sequence, read N- to C-terminus: Small ribosomal subunit protein bS20 (89 aa).

It belongs to the bacterial ribosomal protein bS20 family.

Its function is as follows. Binds directly to 16S ribosomal RNA. The sequence is that of Small ribosomal subunit protein bS20 from Helicobacter pylori (strain ATCC 700392 / 26695) (Campylobacter pylori).